Here is a 798-residue protein sequence, read N- to C-terminus: Penicillin-binding protein 1A (798 aa).

The Cytoplasmic portion of the chain corresponds to 1 to 9 (MIKKIMTTC). The helical; Signal-anchor for type II membrane protein transmembrane segment at 10–30 (FGLVFGLCVFAVGLLAIAILA) threads the bilayer. Residues 31 to 798 (TYPKLPSLDS…SKRQQLDSLF (768 aa)) lie on the Periplasmic side of the membrane. The transglycosylase stretch occupies residues 50–218 (LTVYSADGKI…SAYNPIVNPE (169 aa)). Glutamate 88 serves as the catalytic Proton donor; for transglycosylase activity. Residues 378 to 700 (RRALGFAARA…GTIAVPVWVD (323 aa)) are transpeptidase. The active-site Acyl-ester intermediate; for transpeptidase activity is the serine 461. The tract at residues 739–798 (LMLDNGGAAPQPSRRVKEDDGGAAEGGRQEADDESRQDMQETPVLPSNTDSKRQQLDSLF) is disordered. Composition is skewed to basic and acidic residues over residues 765-777 (GRQE…RQDM) and 788-798 (DSKRQQLDSLF).

In the N-terminal section; belongs to the glycosyltransferase 51 family. This sequence in the C-terminal section; belongs to the transpeptidase family.

The protein localises to the cell inner membrane. It catalyses the reaction [GlcNAc-(1-&gt;4)-Mur2Ac(oyl-L-Ala-gamma-D-Glu-L-Lys-D-Ala-D-Ala)](n)-di-trans,octa-cis-undecaprenyl diphosphate + beta-D-GlcNAc-(1-&gt;4)-Mur2Ac(oyl-L-Ala-gamma-D-Glu-L-Lys-D-Ala-D-Ala)-di-trans,octa-cis-undecaprenyl diphosphate = [GlcNAc-(1-&gt;4)-Mur2Ac(oyl-L-Ala-gamma-D-Glu-L-Lys-D-Ala-D-Ala)](n+1)-di-trans,octa-cis-undecaprenyl diphosphate + di-trans,octa-cis-undecaprenyl diphosphate + H(+). The catalysed reaction is Preferential cleavage: (Ac)2-L-Lys-D-Ala-|-D-Ala. Also transpeptidation of peptidyl-alanyl moieties that are N-acyl substituents of D-alanine.. The protein operates within cell wall biogenesis; peptidoglycan biosynthesis. Its function is as follows. Cell wall formation. Synthesis of cross-linked peptidoglycan from the lipid intermediates. The enzyme has a penicillin-insensitive transglycosylase N-terminal domain (formation of linear glycan strands) and a penicillin-sensitive transpeptidase C-terminal domain (cross-linking of the peptide subunits). The polypeptide is Penicillin-binding protein 1A (mrcA) (Neisseria lactamica).